Reading from the N-terminus, the 329-residue chain is uncharacterized protein (329 aa).

Disordered stretches follow at residues 16-41 (RCGY…SRIC) and 183-229 (LENK…KFEP). Residues 213–229 (SNDKANRGEKGEAKFEP) are compositionally biased toward basic and acidic residues.

As to expression, expressed in testis and epididymis. Expressed at lower levels in ovary.

Its function is as follows. Dispensable for normal development and fertility. This is an uncharacterized protein from Mus musculus (Mouse).